A 334-amino-acid chain; its full sequence is Ketol-acid reductoisomerase (NADP(+)) (334 aa).

The 180-residue stretch at 2–181 (TKVYYDQSVE…GATRAGVIET (180 aa)) folds into the KARI N-terminal Rossmann domain. NADP(+) is bound by residues 25–28 (YGSQ), R48, S52, and 82–85 (DEIQ). The active site involves H107. An NADP(+)-binding site is contributed by G133. Positions 182–327 (TFKEETETDL…RELRKMMPFI (146 aa)) constitute a KARI C-terminal knotted domain. Residues D190, E194, E226, and E230 each contribute to the Mg(2+) site. Position 251 (S251) interacts with substrate.

Belongs to the ketol-acid reductoisomerase family. Mg(2+) is required as a cofactor.

The catalysed reaction is (2R)-2,3-dihydroxy-3-methylbutanoate + NADP(+) = (2S)-2-acetolactate + NADPH + H(+). The enzyme catalyses (2R,3R)-2,3-dihydroxy-3-methylpentanoate + NADP(+) = (S)-2-ethyl-2-hydroxy-3-oxobutanoate + NADPH + H(+). It participates in amino-acid biosynthesis; L-isoleucine biosynthesis; L-isoleucine from 2-oxobutanoate: step 2/4. Its pathway is amino-acid biosynthesis; L-valine biosynthesis; L-valine from pyruvate: step 2/4. Functionally, involved in the biosynthesis of branched-chain amino acids (BCAA). Catalyzes an alkyl-migration followed by a ketol-acid reduction of (S)-2-acetolactate (S2AL) to yield (R)-2,3-dihydroxy-isovalerate. In the isomerase reaction, S2AL is rearranged via a Mg-dependent methyl migration to produce 3-hydroxy-3-methyl-2-ketobutyrate (HMKB). In the reductase reaction, this 2-ketoacid undergoes a metal-dependent reduction by NADPH to yield (R)-2,3-dihydroxy-isovalerate. The sequence is that of Ketol-acid reductoisomerase (NADP(+)) from Staphylococcus haemolyticus (strain JCSC1435).